A 678-amino-acid chain; its full sequence is Protein MALE DISCOVERER 2 (678 aa).

A signal peptide spans 1-25 (MMGCGFHFPWFFFLIIGLQAPLSLS). The Extracellular portion of the chain corresponds to 26-323 (LTSQGSALLK…SKGSKHVWLY (298 aa)). Residue Asn-52 is glycosylated (N-linked (GlcNAc...) asparagine). LRR repeat units follow at residues 71-94 (KVQILDLSGYSLEGTLAPELSQLS), 95-117 (DLRSLILSRNHFSGGIPKEYGSF), 119-141 (NLEVLDLRENDLSGQIPPELSNG), and 143-164 (SLKHLLLSGNKFSDDMRIKIVR). Residues 247 to 314 (LAAEPAPSAP…KNQPQDNKQS (68 aa)) form a disordered region. A compositionally biased stretch (polar residues) spans 296–311 (KGSTSPDISKNQPQDN). Residues 324–344 (VVIAVASFVGLLIIVAVIFFC) form a helical membrane-spanning segment. The Cytoplasmic segment spans residues 345-678 (RKRAVKSIGP…ELEILSSEAT (334 aa)). Positions 346–651 (KRAVKSIGPW…DVAEQLKQVI (306 aa)) constitute a Protein kinase domain.

The protein belongs to the protein kinase superfamily. Ser/Thr protein kinase family. In terms of tissue distribution, expressed in pollen tubes and seedlings.

Its subcellular location is the endomembrane system. It catalyses the reaction L-seryl-[protein] + ATP = O-phospho-L-seryl-[protein] + ADP + H(+). The enzyme catalyses L-threonyl-[protein] + ATP = O-phospho-L-threonyl-[protein] + ADP + H(+). Its function is as follows. Involved in the pollen tube perception of the female signal by binding an unidentified female attractant. May be involved in the regulation of root hairs development. The sequence is that of Protein MALE DISCOVERER 2 (MDIS2) from Arabidopsis thaliana (Mouse-ear cress).